We begin with the raw amino-acid sequence, 137 residues long: MLQPKRTKFRKQQKGRNRGQALRGSQIDFGEYGLKAIGRGRITARQIEAARRAMTRHIKRGGKIWIRIFPDKPITQKPLEVRQGKGKGGVEFWAANIQPGRVLYEMEGVPEGVARRAFELAAAKLPIKTVFVTRAIM.

Positions 1 to 17 (MLQPKRTKFRKQQKGRN) are enriched in basic residues. Positions 1-21 (MLQPKRTKFRKQQKGRNRGQA) are disordered.

The protein belongs to the universal ribosomal protein uL16 family. In terms of assembly, part of the 50S ribosomal subunit.

Its function is as follows. Binds 23S rRNA and is also seen to make contacts with the A and possibly P site tRNAs. The sequence is that of Large ribosomal subunit protein uL16 from Nitrosococcus oceani (strain ATCC 19707 / BCRC 17464 / JCM 30415 / NCIMB 11848 / C-107).